The following is a 398-amino-acid chain: Rhizopuspepsin-4 (398 aa).

An N-terminal signal peptide occupies residues 1–21 (MKFTLISSCVALACMALAVEA). The propeptide at 22 to 74 (APSGKKINVPLSKNANYKPNAKRAIEKANAKYARFRSSSSSSSSSSCGSAGTE) is activation peptide. The segment covering 58 to 78 (SSSSSSSSSSCGSAGTESSGS) has biased composition (low complexity). The tract at residues 58 to 83 (SSSSSSSSSSCGSAGTESSGSVPVTD) is disordered. The region spanning 90-394 (YYGEVTVGTP…NPQVPQVQIA (305 aa)) is the Peptidase A1 domain. Aspartate 108 is a catalytic residue. Cysteines 121 and 124 form a disulfide. Aspartate 291 is an active-site residue. Cysteine 325 and cysteine 358 form a disulfide bridge.

It belongs to the peptidase A1 family.

The enzyme catalyses Hydrolysis of proteins with broad specificity similar to that of pepsin A, preferring hydrophobic residues at P1 and P1'. Clots milk and activates trypsinogen. Does not cleave 4-Gln-|-His-5, but does cleave 10-His-|-Leu-11 and 12-Val-|-Glu-13 in B chain of insulin.. This chain is Rhizopuspepsin-4, found in Rhizopus niveus.